A 419-amino-acid chain; its full sequence is Probable serine/threonine-protein kinase DDB_G0290859 (419 aa).

In terms of domain architecture, Protein kinase spans 40–387; it reads YDIISTIGSG…ASTIKKHPFF (348 aa). ATP-binding positions include 46 to 54 and Lys69; that span reads IGSGSYGEV. Asp173 functions as the Proton acceptor in the catalytic mechanism. Residues 388 to 419 enclose the AGC-kinase C-terminal domain; sequence EGINWEEMANFNVEPPFKPTLSSDDDISYFTN.

This sequence belongs to the protein kinase superfamily. AGC Ser/Thr protein kinase family.

The enzyme catalyses L-seryl-[protein] + ATP = O-phospho-L-seryl-[protein] + ADP + H(+). It catalyses the reaction L-threonyl-[protein] + ATP = O-phospho-L-threonyl-[protein] + ADP + H(+). This Dictyostelium discoideum (Social amoeba) protein is Probable serine/threonine-protein kinase DDB_G0290859.